The sequence spans 175 residues: Austinoid biosynthesis cluster protein F (175 aa).

Belongs to the trt14 isomerase family. As to quaternary structure, homodimer.

Its pathway is secondary metabolite biosynthesis; terpenoid biosynthesis. In terms of biological role, part of the gene cluster that mediates the biosynthesis of calidodehydroaustin, a fungal meroterpenoid. The first step of the pathway is the synthesis of 3,5-dimethylorsellinic acid by the polyketide synthase ausA. 3,5-dimethylorsellinic acid is then prenylated by the polyprenyl transferase ausN. Further epoxidation by the FAD-dependent monooxygenase ausM and cyclization by the probable terpene cyclase ausL lead to the formation of protoaustinoid A. Protoaustinoid A is then oxidized to spiro-lactone preaustinoid A3 by the combined action of the FAD-binding monooxygenases ausB and ausC, and the dioxygenase ausE. Acid-catalyzed keto-rearrangement and ring contraction of the tetraketide portion of preaustinoid A3 by ausJ lead to the formation of preaustinoid A4. The aldo-keto reductase ausK, with the help of ausH, is involved in the next step by transforming preaustinoid A4 into isoaustinone which is in turn hydroxylated by the P450 monooxygenase ausI to form austinolide. The cytochrome P450 monooxygenase ausG modifies austinolide to austinol. Austinol is further acetylated to austin by the O-acetyltransferase ausP, which spontaneously changes to dehydroaustin. The cytochrome P450 monooxygenase ausR then converts dehydroaustin is into 7-dehydrodehydroaustin. The hydroxylation catalyzed by ausR permits the O-acetyltransferase ausQ to add an additional acetyl group to the molecule, leading to the formation of acetoxydehydroaustin. The short chain dehydrogenase ausT catalyzes the reduction of the double bond present between carbon atoms 1 and 2 to convert 7-dehydrodehydroaustin into 1,2-dihydro-7-hydroxydehydroaustin. AusQ catalyzes not only an acetylation reaction but also the addition of the PKS ausV diketide product to 1,2-dihydro-7-hydroxydehydroaustin, forming precalidodehydroaustin. Finally, the iron/alpha-ketoglutarate-dependent dioxygenase converts precalidodehydroaustin into calidodehydroaustin. This chain is Austinoid biosynthesis cluster protein F, found in Aspergillus calidoustus.